Here is a 608-residue protein sequence, read N- to C-terminus: Protein trichome birefringence (608 aa).

The helical; Signal-anchor for type II membrane protein transmembrane segment at 38–58 (TFAYAFVITFVSFTLFFAFSP) threads the bilayer. Composition is skewed to polar residues over residues 101–137 (STKPTNRSSDATDSLSVNATSPPLNSNSKNGTLQTPA) and 145–203 (AKNT…TSPA). The disordered stretch occupies residues 101–236 (STKPTNRSSD…TPKKQTKTVD (136 aa)). Residues 215-227 (TNSSSNSSTASST) are compositionally biased toward low complexity. Positions 328 to 330 (GDS) match the GDS motif motif. The DCXHWCLPGXXDXWN motif signature appears at 573–587 (DCSHWCLPGVPDSWN).

Belongs to the PC-esterase family. TBL subfamily. As to expression, expressed in leaf vasculature, growing part of the root, expanding inflorescence stems and trichomes.

It is found in the membrane. Its function is as follows. Required during cellulose deposition. May act as a bridging protein that binds pectin and other cell wall polysaccharides. Probably involved in maintaining esterification of pectins. May be involved in the specific O-acetylation of cell wall polymers. The protein is Protein trichome birefringence (TBR) of Arabidopsis thaliana (Mouse-ear cress).